The following is a 288-amino-acid chain: ATP synthase gamma chain (288 aa).

Belongs to the ATPase gamma chain family. F-type ATPases have 2 components, CF(1) - the catalytic core - and CF(0) - the membrane proton channel. CF(1) has five subunits: alpha(3), beta(3), gamma(1), delta(1), epsilon(1). CF(0) has three main subunits: a, b and c.

It is found in the cell inner membrane. In terms of biological role, produces ATP from ADP in the presence of a proton gradient across the membrane. The gamma chain is believed to be important in regulating ATPase activity and the flow of protons through the CF(0) complex. This Vibrio vulnificus (strain CMCP6) protein is ATP synthase gamma chain.